Reading from the N-terminus, the 735-residue chain is Ribosomal protein S6 kinase alpha-1 (735 aa).

A Phosphoserine modification is found at Ser-54. The region spanning 62 to 321 is the Protein kinase 1 domain; that stretch reads FELLKVLGQG…AEEIKRHVFY (260 aa). Residues 68 to 76 and Lys-94 each bind ATP; that span reads LGQGSFGKV. Asp-187 (proton acceptor) is an active-site residue. The residue at position 221 (Ser-221) is a Phosphoserine; by PDPK1. Ser-307 carries the phosphoserine modification. In terms of domain architecture, AGC-kinase C-terminal spans 322 to 391; the sequence is STIDWNKLYR…VATGLMEDDG (70 aa). Phosphothreonine is present on Thr-359. A phosphoserine mark is found at Ser-363 and Ser-369. Ser-380 carries the phosphoserine; by autocatalysis modification. The region spanning 418–675 is the Protein kinase 2 domain; the sequence is YVVKETIGVG…AKQVLQHPWV (258 aa). ATP is bound by residues 424–432 and Lys-447; that span reads IGVGSYSEC. Catalysis depends on Asp-535, which acts as the Proton acceptor. Thr-573 carries the post-translational modification Phosphothreonine. The residue at position 732 (Ser-732) is a Phosphoserine.

This sequence belongs to the protein kinase superfamily. AGC Ser/Thr protein kinase family. S6 kinase subfamily. Forms a complex with either MAPK1/ERK2 or MAPK3/ERK1 in quiescent cells. Transiently dissociates following mitogenic stimulation. Interacts with ETV1/ER81 and FGFR1. In terms of assembly, (Microbial infection) Interacts with Kaposi's sarcoma-associated herpesvirus/HHV-8 protein ORF45; this interaction allows RPS6KA1 activation. Mg(2+) is required as a cofactor. In terms of processing, activated by phosphorylation at Ser-221 by PDPK1. Autophosphorylated on Ser-380, as part of the activation process. May be phosphorylated at Thr-359 and Ser-363 by MAPK1/ERK2 and MAPK3/ERK1. N-terminal myristoylation results in an activated kinase in the absence of added growth factors.

Its subcellular location is the nucleus. It localises to the cytoplasm. The catalysed reaction is L-seryl-[protein] + ATP = O-phospho-L-seryl-[protein] + ADP + H(+). The enzyme catalyses L-threonyl-[protein] + ATP = O-phospho-L-threonyl-[protein] + ADP + H(+). Upon extracellular signal or mitogen stimulation, phosphorylated at Thr-573 in the C-terminal kinase domain (CTKD) by MAPK1/ERK2 and MAPK3/ERK1. The activated CTKD then autophosphorylates Ser-380, allowing binding of PDPK1, which in turn phosphorylates Ser-221 in the N-terminal kinase domain (NTDK) leading to the full activation of the protein and subsequent phosphorylation of the substrates by the NTKD. Functionally, serine/threonine-protein kinase that acts downstream of ERK (MAPK1/ERK2 and MAPK3/ERK1) signaling and mediates mitogenic and stress-induced activation of the transcription factors CREB1, ETV1/ER81 and NR4A1/NUR77, regulates translation through RPS6 and EIF4B phosphorylation, and mediates cellular proliferation, survival, and differentiation by modulating mTOR signaling and repressing pro-apoptotic function of BAD and DAPK1. In fibroblast, is required for EGF-stimulated phosphorylation of CREB1, which results in the subsequent transcriptional activation of several immediate-early genes. In response to mitogenic stimulation (EGF and PMA), phosphorylates and activates NR4A1/NUR77 and ETV1/ER81 transcription factors and the cofactor CREBBP. Upon insulin-derived signal, acts indirectly on the transcription regulation of several genes by phosphorylating GSK3B at 'Ser-9' and inhibiting its activity. Phosphorylates RPS6 in response to serum or EGF via an mTOR-independent mechanism and promotes translation initiation by facilitating assembly of the pre-initiation complex. In response to insulin, phosphorylates EIF4B, enhancing EIF4B affinity for the EIF3 complex and stimulating cap-dependent translation. Is involved in the mTOR nutrient-sensing pathway by directly phosphorylating TSC2 at 'Ser-1798', which potently inhibits TSC2 ability to suppress mTOR signaling, and mediates phosphorylation of RPTOR, which regulates mTORC1 activity and may promote rapamycin-sensitive signaling independently of the PI3K/AKT pathway. Also involved in feedback regulation of mTORC1 and mTORC2 by phosphorylating DEPTOR. Mediates cell survival by phosphorylating the pro-apoptotic proteins BAD and DAPK1 and suppressing their pro-apoptotic function. Promotes the survival of hepatic stellate cells by phosphorylating CEBPB in response to the hepatotoxin carbon tetrachloride (CCl4). Mediates induction of hepatocyte prolifration by TGFA through phosphorylation of CEBPB. Is involved in cell cycle regulation by phosphorylating the CDK inhibitor CDKN1B, which promotes CDKN1B association with 14-3-3 proteins and prevents its translocation to the nucleus and inhibition of G1 progression. Phosphorylates EPHA2 at 'Ser-897', the RPS6KA-EPHA2 signaling pathway controls cell migration. In response to mTORC1 activation, phosphorylates EIF4B at 'Ser-406' and 'Ser-422' which stimulates bicarbonate cotransporter SLC4A7 mRNA translation, increasing SLC4A7 protein abundance and function. Its function is as follows. (Microbial infection) Promotes the late transcription and translation of viral lytic genes during Kaposi's sarcoma-associated herpesvirus/HHV-8 infection, when constitutively activated. The polypeptide is Ribosomal protein S6 kinase alpha-1 (RPS6KA1) (Homo sapiens (Human)).